Here is a 1064-residue protein sequence, read N- to C-terminus: DNA-directed RNA polymerase subunit beta (1064 aa).

Belongs to the RNA polymerase beta chain family. In plastids the minimal PEP RNA polymerase catalytic core is composed of four subunits: alpha, beta, beta', and beta''. When a (nuclear-encoded) sigma factor is associated with the core the holoenzyme is formed, which can initiate transcription.

The protein resides in the plastid. The protein localises to the chloroplast. The catalysed reaction is RNA(n) + a ribonucleoside 5'-triphosphate = RNA(n+1) + diphosphate. Functionally, DNA-dependent RNA polymerase catalyzes the transcription of DNA into RNA using the four ribonucleoside triphosphates as substrates. The chain is DNA-directed RNA polymerase subunit beta from Jasminum nudiflorum (Winter jasmine).